The chain runs to 226 residues: Ribonuclease 3 (226 aa).

An RNase III domain is found at 7–129 (LPRLCRTLSY…IIGAVYLDSD (123 aa)). Position 42 (Glu42) interacts with Mg(2+). Residue Asp46 is part of the active site. Positions 115 and 118 each coordinate Mg(2+). Glu118 is an active-site residue. The DRBM domain maps to 156 to 226 (DAKTLLQEHL…AAQVLELLKK (71 aa)).

The protein belongs to the ribonuclease III family. In terms of assembly, homodimer. The cofactor is Mg(2+).

It localises to the cytoplasm. It catalyses the reaction Endonucleolytic cleavage to 5'-phosphomonoester.. Digests double-stranded RNA. Involved in the processing of primary rRNA transcript to yield the immediate precursors to the large and small rRNAs (23S and 16S). Processes some mRNAs, and tRNAs when they are encoded in the rRNA operon. Processes pre-crRNA and tracrRNA of type II CRISPR loci if present in the organism. The chain is Ribonuclease 3 from Shewanella baltica (strain OS223).